The following is a 781-amino-acid chain: Phenylalanine--tRNA ligase beta subunit (781 aa).

In terms of domain architecture, tRNA-binding spans 39–147 (APPFNDVVVA…DDAPVGEDLR (109 aa)). The region spanning 398 to 473 (PRREPIELRL…RLFGYDRIPA (76 aa)) is the B5 domain. Mg(2+)-binding residues include Asp-451, Asp-457, Glu-460, and Glu-461. Residues 687 to 780 (SRFPQVRRDL…AARRCSATLR (94 aa)) enclose the FDX-ACB domain.

This sequence belongs to the phenylalanyl-tRNA synthetase beta subunit family. Type 1 subfamily. Tetramer of two alpha and two beta subunits. Mg(2+) serves as cofactor.

It is found in the cytoplasm. It carries out the reaction tRNA(Phe) + L-phenylalanine + ATP = L-phenylalanyl-tRNA(Phe) + AMP + diphosphate + H(+). This is Phenylalanine--tRNA ligase beta subunit from Thiobacillus denitrificans (strain ATCC 25259 / T1).